Reading from the N-terminus, the 256-residue chain is Alcohol dehydrogenase (256 aa).

Position 12 to 35 (Phe-12 to Leu-35) interacts with NAD(+). Ser-140 provides a ligand contact to substrate. Tyr-153 (proton acceptor) is an active-site residue.

It belongs to the short-chain dehydrogenases/reductases (SDR) family. As to quaternary structure, homodimer.

The enzyme catalyses a primary alcohol + NAD(+) = an aldehyde + NADH + H(+). It carries out the reaction a secondary alcohol + NAD(+) = a ketone + NADH + H(+). The polypeptide is Alcohol dehydrogenase (Adh) (Drosophila mauritiana (Fruit fly)).